We begin with the raw amino-acid sequence, 261 residues long: Undecaprenyl-diphosphatase (261 aa).

A run of 8 helical transmembrane segments spans residues 1-21, 41-61, 69-89, 95-115, 129-149, 169-186, 206-226, and 241-261; these read MNYI…FLPV, FTKL…VVLY, LDFY…GLLF, ALLE…IILL, ITYL…IPGV, AAEF…GATL, ILII…KTFI, and RIVA…LTLI.

It belongs to the UppP family.

Its subcellular location is the cell inner membrane. The enzyme catalyses di-trans,octa-cis-undecaprenyl diphosphate + H2O = di-trans,octa-cis-undecaprenyl phosphate + phosphate + H(+). Catalyzes the dephosphorylation of undecaprenyl diphosphate (UPP). Confers resistance to bacitracin. This is Undecaprenyl-diphosphatase from Flavobacterium psychrophilum (strain ATCC 49511 / DSM 21280 / CIP 103535 / JIP02/86).